The primary structure comprises 659 residues: RNA-binding protein MIP6 (659 aa).

A compositionally biased stretch (polar residues) spans 1–27 (MPNSHGNVLNNISLNSKQNPRSISKSC). A disordered region spans residues 1–35 (MPNSHGNVLNNISLNSKQNPRSISKSCPNDKDARQ). RRM domains are found at residues 111-189 (NSLF…PSMK), 199-267 (TNVF…GNKI), and 313-389 (KTIL…PGKD).

In terms of assembly, interacts with MEX67.

The protein localises to the cytoplasm. In Saccharomyces cerevisiae (strain ATCC 204508 / S288c) (Baker's yeast), this protein is RNA-binding protein MIP6 (MIP6).